A 300-amino-acid polypeptide reads, in one-letter code: tRNA pseudouridine synthase B (300 aa).

The active-site Nucleophile is the Asp-38.

It belongs to the pseudouridine synthase TruB family. Type 1 subfamily.

The catalysed reaction is uridine(55) in tRNA = pseudouridine(55) in tRNA. Functionally, responsible for synthesis of pseudouridine from uracil-55 in the psi GC loop of transfer RNAs. The protein is tRNA pseudouridine synthase B of Anaplasma phagocytophilum (strain HZ).